A 144-amino-acid polypeptide reads, in one-letter code: Bacilliredoxin BCE33L1972 (144 aa).

This sequence belongs to the bacilliredoxin family.

This chain is Bacilliredoxin BCE33L1972, found in Bacillus cereus (strain ZK / E33L).